The following is a 472-amino-acid chain: GTPase Der (472 aa).

EngA-type G domains lie at 3-166 (AVIA…PPAE) and 178-351 (IPVA…AAAH). GTP contacts are provided by residues 9-16 (GRPNVGKS), 56-60 (DTGGM), 118-121 (NKTD), 184-191 (GRPNVGKS), 231-235 (DTAGV), and 296-299 (NKWD). A KH-like domain is found at 352–436 (RDLATPELND…PVRIECRASD (85 aa)). The disordered stretch occupies residues 434–472 (ASDNPFADKPNQLTERQRRRRQRVIHHAKKREKKRKRRR). The span at 450-472 (QRRRRQRVIHHAKKREKKRKRRR) shows a compositional bias: basic residues.

This sequence belongs to the TRAFAC class TrmE-Era-EngA-EngB-Septin-like GTPase superfamily. EngA (Der) GTPase family. Associates with the 50S ribosomal subunit.

In terms of biological role, GTPase that plays an essential role in the late steps of ribosome biogenesis. The polypeptide is GTPase Der (Halorhodospira halophila (strain DSM 244 / SL1) (Ectothiorhodospira halophila (strain DSM 244 / SL1))).